A 121-amino-acid chain; its full sequence is Basic phospholipase A2 homolog AppP2 (121 aa).

Cystine bridges form between Cys26-Cys115, Cys28-Cys44, Cys43-Cys95, Cys49-Cys121, Cys50-Cys88, Cys57-Cys81, and Cys75-Cys86. The tract at residues 105–117 (KKYKAYFKLKCKK) is important for membrane-damaging activities in eukaryotes and bacteria; heparin-binding.

The protein belongs to the phospholipase A2 family. Group II subfamily. K49 sub-subfamily. As to quaternary structure, monomer. Expressed by the venom gland.

The protein localises to the secreted. Functionally, snake venom phospholipase A2 (PLA2) that lacks enzymatic activity. Displays edema-inducing activities. Is myotoxic. A model of myotoxic mechanism has been proposed: an apo Lys49-PLA2 is activated by the entrance of a hydrophobic molecule (e.g. fatty acid) at the hydrophobic channel of the protein leading to a reorientation of a monomer. This reorientation causes a transition between 'inactive' to 'active' states, causing alignment of C-terminal and membrane-docking sites (MDoS) side-by-side and putting the membrane-disruption sites (MDiS) in the same plane, exposed to solvent and in a symmetric position for both monomers. The MDoS region stabilizes the toxin on membrane by the interaction of charged residues with phospholipid head groups. Subsequently, the MDiS region destabilizes the membrane with penetration of hydrophobic residues. This insertion causes a disorganization of the membrane, allowing an uncontrolled influx of ions (i.e. calcium and sodium), and eventually triggering irreversible intracellular alterations and cell death. In Agkistrodon piscivorus piscivorus (Eastern cottonmouth), this protein is Basic phospholipase A2 homolog AppP2.